Consider the following 332-residue polypeptide: Geranylgeranyl pyrophosphate synthase dpasD (332 aa).

Residues Lys55, Arg58, and His87 each coordinate isopentenyl diphosphate. Residues Asp94 and Asp98 each contribute to the Mg(2+) site. Residue Arg103 participates in dimethylallyl diphosphate binding. An isopentenyl diphosphate-binding site is contributed by Arg104. Lys181, Thr182, and Gln215 together coordinate dimethylallyl diphosphate. Residue Asp218 coordinates Mg(2+). Residues Asn222, Lys232, and Lys242 each coordinate dimethylallyl diphosphate.

The protein belongs to the FPP/GGPP synthase family. Requires Mg(2+) as cofactor.

The enzyme catalyses isopentenyl diphosphate + dimethylallyl diphosphate = (2E)-geranyl diphosphate + diphosphate. The catalysed reaction is isopentenyl diphosphate + (2E)-geranyl diphosphate = (2E,6E)-farnesyl diphosphate + diphosphate. It catalyses the reaction isopentenyl diphosphate + (2E,6E)-farnesyl diphosphate = (2E,6E,10E)-geranylgeranyl diphosphate + diphosphate. It participates in secondary metabolite biosynthesis; terpenoid biosynthesis. Functionally, geranylgeranyl pyrophosphate synthase; part of the gene cluster that mediates the biosynthesis of the diterpenoid pyrones subglutinols A and B. The first step of the pathway is the synthesis of the alpha-pyrone moiety by the polyketide synthase dpasA via condensation of one acetyl-CoA starter unit with 3 malonyl-CoA units and 2 methylations. The alpha-pyrone is then combined with geranylgeranyl pyrophosphate (GGPP) formed by the GGPP synthase dpasD through the action of the prenyltransferase dpasC to yield a linear alpha-pyrone diterpenoid. Subsequent steps in the diterpenoid pyrone biosynthetic pathway involve the decalin core formation, which is initiated by the epoxidation of the C10-C11 olefin by the FAD-dependent oxidoreductase dpasE, and is followed by a cyclization cascade catalyzed by the terpene cyclase dpasB. The FAD-linked oxidoreductase dpasF is then involved in tetrahydrofuran (THF) ring formation at the C5 unit to complete the formation of subglutinols A and B. DpasF also possesses an additional catalytic ability of multi-step oxidations to generate a new DDP analog with an enone system at the C5 named FDDP A. The protein is Geranylgeranyl pyrophosphate synthase dpasD of Apiospora sacchari (Arthrinium sacchari).